The sequence spans 478 residues: Proline--tRNA ligase (478 aa).

The protein belongs to the class-II aminoacyl-tRNA synthetase family. ProS type 3 subfamily. Homodimer.

The protein localises to the cytoplasm. The enzyme catalyses tRNA(Pro) + L-proline + ATP = L-prolyl-tRNA(Pro) + AMP + diphosphate. Its function is as follows. Catalyzes the attachment of proline to tRNA(Pro) in a two-step reaction: proline is first activated by ATP to form Pro-AMP and then transferred to the acceptor end of tRNA(Pro). In Methanococcoides burtonii (strain DSM 6242 / NBRC 107633 / OCM 468 / ACE-M), this protein is Proline--tRNA ligase.